We begin with the raw amino-acid sequence, 98 residues long: NADH-ubiquinone oxidoreductase chain 4L (98 aa).

The next 3 helical transmembrane spans lie at 1–21 (MPII…GMLI), 29–49 (SLLC…LMAL), and 58–78 (IVPI…LALL).

It belongs to the complex I subunit 4L family. In terms of assembly, core subunit of respiratory chain NADH dehydrogenase (Complex I) which is composed of 45 different subunits.

The protein resides in the mitochondrion inner membrane. The catalysed reaction is a ubiquinone + NADH + 5 H(+)(in) = a ubiquinol + NAD(+) + 4 H(+)(out). Its function is as follows. Core subunit of the mitochondrial membrane respiratory chain NADH dehydrogenase (Complex I) which catalyzes electron transfer from NADH through the respiratory chain, using ubiquinone as an electron acceptor. Part of the enzyme membrane arm which is embedded in the lipid bilayer and involved in proton translocation. This Colobus guereza (Mantled guereza) protein is NADH-ubiquinone oxidoreductase chain 4L (MT-ND4L).